The following is a 451-amino-acid chain: Eukaryotic translation initiation factor 3 subunit E (451 aa).

Positions 256–425 (TDLFFSPAYI…GTVIMNHPPQ (170 aa)) constitute a PCI domain.

Belongs to the eIF-3 subunit E family. As to quaternary structure, component of the eukaryotic translation initiation factor 3 (eIF-3) complex.

It localises to the cytoplasm. In terms of biological role, component of the eukaryotic translation initiation factor 3 (eIF-3) complex, which is involved in protein synthesis of a specialized repertoire of mRNAs and, together with other initiation factors, stimulates binding of mRNA and methionyl-tRNAi to the 40S ribosome. The eIF-3 complex specifically targets and initiates translation of a subset of mRNAs involved in cell proliferation. The protein is Eukaryotic translation initiation factor 3 subunit E (int6) of Aspergillus fumigatus (strain CBS 144.89 / FGSC A1163 / CEA10) (Neosartorya fumigata).